The chain runs to 460 residues: 3-isopropylmalate dehydratase large subunit (460 aa).

3 residues coordinate [4Fe-4S] cluster: Cys-338, Cys-398, and Cys-401.

This sequence belongs to the aconitase/IPM isomerase family. LeuC type 1 subfamily. In terms of assembly, heterodimer of LeuC and LeuD. [4Fe-4S] cluster serves as cofactor.

It carries out the reaction (2R,3S)-3-isopropylmalate = (2S)-2-isopropylmalate. It functions in the pathway amino-acid biosynthesis; L-leucine biosynthesis; L-leucine from 3-methyl-2-oxobutanoate: step 2/4. Its function is as follows. Catalyzes the isomerization between 2-isopropylmalate and 3-isopropylmalate, via the formation of 2-isopropylmaleate. The chain is 3-isopropylmalate dehydratase large subunit from Streptococcus thermophilus (strain ATCC BAA-250 / LMG 18311).